A 299-amino-acid chain; its full sequence is Probable endonuclease 4 (299 aa).

Histidine 68, histidine 110, glutamate 145, aspartate 179, histidine 182, histidine 214, aspartate 227, histidine 229, and glutamate 259 together coordinate Zn(2+).

Belongs to the AP endonuclease 2 family. It depends on Zn(2+) as a cofactor.

The enzyme catalyses Endonucleolytic cleavage to 5'-phosphooligonucleotide end-products.. Functionally, endonuclease IV plays a role in DNA repair. It cleaves phosphodiester bonds at apurinic or apyrimidinic (AP) sites, generating a 3'-hydroxyl group and a 5'-terminal sugar phosphate. In Exiguobacterium sibiricum (strain DSM 17290 / CCUG 55495 / CIP 109462 / JCM 13490 / 255-15), this protein is Probable endonuclease 4.